The primary structure comprises 480 residues: Glutamate--tRNA ligase (480 aa).

The 'HIGH' region motif lies at 21-31; sequence PSPTGYLHVGG. Positions 110, 112, 137, and 139 each coordinate Zn(2+). A 'KMSKS' region motif is present at residues 248 to 252; it reads KLSKR. Lys251 is an ATP binding site.

Belongs to the class-I aminoacyl-tRNA synthetase family. Glutamate--tRNA ligase type 1 subfamily. In terms of assembly, monomer. It depends on Zn(2+) as a cofactor.

The protein localises to the cytoplasm. The enzyme catalyses tRNA(Glu) + L-glutamate + ATP = L-glutamyl-tRNA(Glu) + AMP + diphosphate. Catalyzes the attachment of glutamate to tRNA(Glu) in a two-step reaction: glutamate is first activated by ATP to form Glu-AMP and then transferred to the acceptor end of tRNA(Glu). In Haemophilus influenzae (strain PittEE), this protein is Glutamate--tRNA ligase.